The chain runs to 36 residues: Potassium channel toxin alpha-KTx 6.14 (36 aa).

Intrachain disulfides connect C5–C25, C11–C30, C15–C32, and C20–C35.

Expressed by the venom gland.

Its subcellular location is the secreted. Its function is as follows. Blocks Shaker B channels expressed in Sf9 cells, with a dissociation constant of 52 nM. The chain is Potassium channel toxin alpha-KTx 6.14 from Hoffmannihadrurus gertschi (Scorpion).